Here is a 178-residue protein sequence, read N- to C-terminus: Deoxyuridine 5'-triphosphate nucleotidohydrolase (178 aa).

This sequence belongs to the dUTPase family. Mg(2+) is required as a cofactor.

It carries out the reaction dUTP + H2O = dUMP + diphosphate + H(+). It participates in pyrimidine metabolism; dUMP biosynthesis; dUMP from dCTP (dUTP route): step 2/2. Its function is as follows. This enzyme is involved in nucleotide metabolism: it produces dUMP, the immediate precursor of thymidine nucleotides and it decreases the intracellular concentration of dUTP so that uracil cannot be incorporated into DNA. This is Deoxyuridine 5'-triphosphate nucleotidohydrolase from Fowl adenovirus A serotype 1 (strain CELO / Phelps) (FAdV-1).